The chain runs to 150 residues: Nucleoside diphosphate kinase (150 aa).

ATP-binding residues include K9, F57, R85, T91, R102, and N112. H115 functions as the Pros-phosphohistidine intermediate in the catalytic mechanism.

It belongs to the NDK family. As to quaternary structure, homotetramer. Mg(2+) serves as cofactor.

It localises to the cytoplasm. The catalysed reaction is a 2'-deoxyribonucleoside 5'-diphosphate + ATP = a 2'-deoxyribonucleoside 5'-triphosphate + ADP. It catalyses the reaction a ribonucleoside 5'-diphosphate + ATP = a ribonucleoside 5'-triphosphate + ADP. Functionally, major role in the synthesis of nucleoside triphosphates other than ATP. The ATP gamma phosphate is transferred to the NDP beta phosphate via a ping-pong mechanism, using a phosphorylated active-site intermediate. This Symbiobacterium thermophilum (strain DSM 24528 / JCM 14929 / IAM 14863 / T) protein is Nucleoside diphosphate kinase.